A 377-amino-acid chain; its full sequence is S-adenosylmethionine synthase (377 aa).

Histidine 14 contributes to the ATP binding site. Position 16 (aspartate 16) interacts with Mg(2+). Position 42 (glutamate 42) interacts with K(+). Glutamine 98 contributes to the L-methionine binding site. The flexible loop stretch occupies residues 98–108 (QSADIALGIDL). Residues 162–164 (DMK), 228–229 (RF), aspartate 237, 243–244 (RK), alanine 260, and lysine 264 each bind ATP. Aspartate 237 lines the L-methionine pocket. Lysine 268 lines the L-methionine pocket.

The protein belongs to the AdoMet synthase family. In terms of assembly, homotetramer; dimer of dimers. Mg(2+) is required as a cofactor. K(+) serves as cofactor.

It is found in the cytoplasm. It carries out the reaction L-methionine + ATP + H2O = S-adenosyl-L-methionine + phosphate + diphosphate. It participates in amino-acid biosynthesis; S-adenosyl-L-methionine biosynthesis; S-adenosyl-L-methionine from L-methionine: step 1/1. In terms of biological role, catalyzes the formation of S-adenosylmethionine (AdoMet) from methionine and ATP. The overall synthetic reaction is composed of two sequential steps, AdoMet formation and the subsequent tripolyphosphate hydrolysis which occurs prior to release of AdoMet from the enzyme. The polypeptide is S-adenosylmethionine synthase (Mesoplasma florum (strain ATCC 33453 / NBRC 100688 / NCTC 11704 / L1) (Acholeplasma florum)).